The chain runs to 914 residues: Thyroid peroxidase (914 aa).

The signal sequence occupies residues 1 to 31; the sequence is MRTLGAMAVMLVVMGTAIFLPFLLRSRDILG. At 32–834 the chain is on the extracellular side; sequence GKTMTSHVIS…TCIDSGRLPR (803 aa). Asn-123 carries an N-linked (GlcNAc...) asparagine glycan. Cysteines 136 and 152 form a disulfide. Asp-232 is a heme b binding site. His-233 acts as the Proton acceptor in catalysis. Asp-234 contacts Ca(2+). 2 disulfide bridges follow: Cys-253-Cys-263 and Cys-257-Cys-278. 2 N-linked (GlcNAc...) asparagine glycosylation sites follow: Asn-271 and Asn-299. Ca(2+)-binding residues include Thr-313, Phe-315, Asp-317, and Ser-319. Asn-334 is a glycosylation site (N-linked (GlcNAc...) asparagine). Positions 387 and 482 each coordinate heme b. Disulfide bonds link Cys-586-Cys-643, Cys-684-Cys-709, Cys-730-Cys-770, Cys-756-Cys-782, Cys-788-Cys-802, Cys-796-Cys-811, and Cys-813-Cys-826. An N-linked (GlcNAc...) asparagine glycan is attached at Asn-603. The region spanning 728–783 is the Sushi domain; the sequence is DKCVFPEKVDNGNFVHCEESGKLVLVYSCFHGYKLQGQEQVTCTQNGWDSEPPVCK. Positions 784 to 827 constitute an EGF-like; calcium-binding domain; sequence DVNECADLTHPPCHSSAKCKNTKGSFQCVCTDPYMLGEDEKTCI. Residues 835–859 form a helical membrane-spanning segment; that stretch reads ASWVSIALGALLIGGLASLSWTVIC. Topologically, residues 860 to 914 are cytoplasmic; sequence RWTHADKKSTLLITERVTMESGFRKSQESGISPQKAEVQDAEQEPAYGSRVLLCE. The segment at 882-907 is disordered; the sequence is FRKSQESGISPQKAEVQDAEQEPAYG.

It belongs to the peroxidase family. XPO subfamily. As to quaternary structure, interacts with DUOX1, DUOX2 and CYBA. Ca(2+) serves as cofactor. The cofactor is heme b. Heme is covalently bound through a H(2)O(2)-dependent autocatalytic process. Heme insertion is important for the delivery of protein at the cell surface. Post-translationally, cleaved in its N-terminal part.

Its subcellular location is the membrane. It carries out the reaction 2 iodide + H2O2 + 2 H(+) = diiodine + 2 H2O. The enzyme catalyses [thyroglobulin]-L-tyrosine + iodide + H2O2 + H(+) = [thyroglobulin]-3-iodo-L-tyrosine + 2 H2O. The catalysed reaction is [thyroglobulin]-3-iodo-L-tyrosine + iodide + H2O2 + H(+) = [thyroglobulin]-3,5-diiodo-L-tyrosine + 2 H2O. It catalyses the reaction 2 [thyroglobulin]-3,5-diiodo-L-tyrosine + H2O2 = [thyroglobulin]-L-thyroxine + [thyroglobulin]-dehydroalanine + 2 H2O. It carries out the reaction [thyroglobulin]-3-iodo-L-tyrosine + [thyroglobulin]-3,5-diiodo-L-tyrosine + H2O2 = [thyroglobulin]-3,3',5-triiodo-L-thyronine + [thyroglobulin]-dehydroalanine + 2 H2O. Its pathway is hormone biosynthesis; thyroid hormone biosynthesis. Functionally, iodination and coupling of the hormonogenic tyrosines in thyroglobulin to yield the thyroid hormones T(3) and T(4). The protein is Thyroid peroxidase (Tpo) of Rattus norvegicus (Rat).